A 156-amino-acid polypeptide reads, in one-letter code: Ribonuclease H (156 aa).

One can recognise an RNase H type-1 domain in the interval 7 to 148 (QDKIVMIATD…ADQLASDAAI (142 aa)). 4 residues coordinate Mg(2+): Asp-16, Glu-54, Asp-76, and Asp-140.

It belongs to the RNase H family. Monomer. Mg(2+) is required as a cofactor.

Its subcellular location is the cytoplasm. It catalyses the reaction Endonucleolytic cleavage to 5'-phosphomonoester.. Functionally, endonuclease that specifically degrades the RNA of RNA-DNA hybrids. The sequence is that of Ribonuclease H (rnhA) from Zymomonas mobilis subsp. mobilis (strain ATCC 31821 / ZM4 / CP4).